The primary structure comprises 200 residues: Somatotropin (200 aa).

Positions 1–22 (MARVLVVLSVVVASLFFSQGAT) are cleaved as a signal peptide. H38 lines the Zn(2+) pocket. Residues C71 and C173 are joined by a disulfide bond. E182 lines the Zn(2+) pocket. C190 and C198 form a disulfide bridge.

This sequence belongs to the somatotropin/prolactin family.

It localises to the secreted. Its function is as follows. Growth hormone plays an important role in growth control and is involved in the regulation of several anabolic processes. Implicated as an osmoregulatory substance important for seawater adaptation. The protein is Somatotropin (gh) of Heteropneustes fossilis (Stinging catfish).